The sequence spans 118 residues: Large ribosomal subunit protein bL20 (118 aa).

The protein belongs to the bacterial ribosomal protein bL20 family.

In terms of biological role, binds directly to 23S ribosomal RNA and is necessary for the in vitro assembly process of the 50S ribosomal subunit. It is not involved in the protein synthesizing functions of that subunit. The polypeptide is Large ribosomal subunit protein bL20 (Lachnoclostridium phytofermentans (strain ATCC 700394 / DSM 18823 / ISDg) (Clostridium phytofermentans)).